A 630-amino-acid chain; its full sequence is A disintegrin and metalloproteinase with thrombospondin motifs 4 (630 aa).

A propeptide spanning residues 1–5 (RRTKR) is cleaved from the precursor. A Peptidase M12B domain is found at 11–221 (RFVETLVVAD…GYGHCLLDKP (211 aa)). Cystine bridges form between Cys86-Cys138, Cys115-Cys120, Cys132-Cys216, Cys170-Cys200, Cys242-Cys265, Cys253-Cys275, Cys260-Cys294, Cys288-Cys299, Cys325-Cys362, Cys329-Cys367, and Cys340-Cys352. A glycan (N-linked (GlcNAc...) asparagine) is linked at Asn96. His154 contacts Zn(2+). Glu155 is a catalytic residue. His158 and His164 together coordinate Zn(2+). Positions 233 to 303 (GKDYDADRQC…CMGGRCLHVD (71 aa)) constitute a Disintegrin domain. A TSP type-1 domain is found at 313–368 (AGGWGPWGPWGDCSRTCGGGVQFSSRDCTKPVPRNGGKYCEGRRTPFRSCNTKNCP). Asn474 is a glycosylation site (N-linked (GlcNAc...) asparagine). The spacer stretch occupies residues 479–630 (SKQSGSFKKF…LRKRTWAGRK (152 aa)).

In terms of assembly, interacts with SRPX2. It depends on Zn(2+) as a cofactor. In terms of processing, the precursor is cleaved by a furin endopeptidase. Glycosylated. Can be O-fucosylated by POFUT2 on a serine or a threonine residue found within the consensus sequence C1-X(2)-(S/T)-C2-G of the TSP type-1 repeat domains where C1 and C2 are the first and second cysteine residue of the repeat, respectively. Fucosylated repeats can then be further glycosylated by the addition of a beta-1,3-glucose residue by the glucosyltransferase, B3GALTL. Fucosylation mediates the efficient secretion of ADAMTS family members. Can also be C-glycosylated with one or two mannose molecules on tryptophan residues within the consensus sequence W-X-X-W of the TPRs, and N-glycosylated. These other glycosylations can also facilitate secretion. As to expression, brain specific.

It is found in the secreted. Its subcellular location is the extracellular space. The protein localises to the extracellular matrix. It carries out the reaction Glutamyl endopeptidase. Bonds cleaved include 370-Thr-Glu-Gly-Glu-|-Ala-Arg-Gly-Ser-377 in the interglobular domain of mammalian aggrecan.. Functionally, cleaves aggrecan, a cartilage proteoglycan, at the '392-Glu-|-Ala-393' site and may be involved in its turnover. Also cleaves COMP. May play an important role in the destruction of aggrecan in arthritic diseases. This Rattus norvegicus (Rat) protein is A disintegrin and metalloproteinase with thrombospondin motifs 4 (Adamts4).